Here is a 148-residue protein sequence, read N- to C-terminus: Large ribosomal subunit protein uL15 (148 aa).

The tract at residues 1–57 is disordered; sequence MRLHDLYPFPEERKTRKRVGRGSGSGLGCTSGKGNKGQNARAGGGVRPGFEGGQMPL. Gly residues-rich tracts occupy residues 21-35 and 42-52; these read RGSG…GKGN and AGGGVRPGFEG.

This sequence belongs to the universal ribosomal protein uL15 family. Part of the 50S ribosomal subunit.

Its function is as follows. Binds to the 23S rRNA. The protein is Large ribosomal subunit protein uL15 of Nitratidesulfovibrio vulgaris (strain ATCC 29579 / DSM 644 / CCUG 34227 / NCIMB 8303 / VKM B-1760 / Hildenborough) (Desulfovibrio vulgaris).